Consider the following 243-residue polypeptide: Venom nerve growth factor 1 (243 aa).

The N-terminal stretch at 1 to 18 is a signal peptide; the sequence is MSMLCYTLIIAFLIGIWA. The propeptide occupies 19–125; it reads APKSEDNVPL…TLNRNIRAKR (107 aa). Residues 47-66 are compositionally biased toward basic and acidic residues; the sequence is GLKTSRNTDQRHPAPKKAED. The disordered stretch occupies residues 47–69; it reads GLKTSRNTDQRHPAPKKAEDQEL. 3 disulfides stabilise this stretch: Cys-139–Cys-204, Cys-182–Cys-232, and Cys-192–Cys-234. Asn-148 carries N-linked (GlcNAc...) asparagine glycosylation.

It belongs to the NGF-beta family. In terms of assembly, homodimer; non-covalently linked. In terms of tissue distribution, expressed by the venom gland.

Its subcellular location is the secreted. Nerve growth factor is important for the development and maintenance of the sympathetic and sensory nervous systems. It stimulates division and differentiation of sympathetic and embryonic sensory neurons as well as basal forebrain cholinergic neurons in the brain. Its relevance in the snake venom is not clear. However, it has been shown to inhibit metalloproteinase-dependent proteolysis of platelet glycoprotein Ib alpha, suggesting a metalloproteinase inhibition to prevent metalloprotease autodigestion and/or protection against prey proteases. Binds a lipid between the two protein chains in the homodimer. The lipid-bound form promotes histamine relase from mouse mast cells, contrary to the lipid-free form. The polypeptide is Venom nerve growth factor 1 (Oxyuranus microlepidotus (Inland taipan)).